The following is a 428-amino-acid chain: 3-phosphoshikimate 1-carboxyvinyltransferase (428 aa).

The 3-phosphoshikimate site is built by Lys23, Ser24, and Arg28. Phosphoenolpyruvate is bound at residue Lys23. Gly97 and Arg125 together coordinate phosphoenolpyruvate. 7 residues coordinate 3-phosphoshikimate: Ser170, Ser171, Gln172, Ser198, Asp314, Asn337, and Lys341. Gln172 is a phosphoenolpyruvate binding site. The active-site Proton acceptor is Asp314. 3 residues coordinate phosphoenolpyruvate: Arg345, Arg387, and Lys412.

The protein belongs to the EPSP synthase family. As to quaternary structure, monomer.

It is found in the cytoplasm. The enzyme catalyses 3-phosphoshikimate + phosphoenolpyruvate = 5-O-(1-carboxyvinyl)-3-phosphoshikimate + phosphate. The protein operates within metabolic intermediate biosynthesis; chorismate biosynthesis; chorismate from D-erythrose 4-phosphate and phosphoenolpyruvate: step 6/7. Catalyzes the transfer of the enolpyruvyl moiety of phosphoenolpyruvate (PEP) to the 5-hydroxyl of shikimate-3-phosphate (S3P) to produce enolpyruvyl shikimate-3-phosphate and inorganic phosphate. This is 3-phosphoshikimate 1-carboxyvinyltransferase from Yersinia pseudotuberculosis serotype IB (strain PB1/+).